A 701-amino-acid chain; its full sequence is Nucleolar transcription factor 1-B (701 aa).

The disordered stretch occupies residues 1–21; sequence MNGAAGGDTQGKMTAPKDQDQ. 5 consecutive DNA-binding regions (HMG box) follow at residues 112-180, 196-264, 298-362, 422-489, and 508-574; these read PKKP…AKFR, PEKP…REYM, TKPP…MRFL, PETP…SDMR, and KKAP…DTWM. The interval 382-426 is disordered; sequence MKRKRTNTPASKMATEDAAKVKSRSGQADKKKAAEERAKLPETPK. Residues 408–426 are compositionally biased toward basic and acidic residues; it reads QADKKKAAEERAKLPETPK. Positions 584-701 are disordered; it reads AYKEQNTNKR…SADSSDSDSN (118 aa). Residues 597–612 show a composition bias toward polar residues; that stretch reads TKIQAPSSKSKLVIQS. Acidic residues predominate over residues 615 to 682; the sequence is DDDEDDEDDE…DNEEDDDDNE (68 aa). Low complexity predominate over residues 683 to 695; sequence SGSSSSSSSSADS.

In terms of assembly, XUBF consists of 2 polypeptides of 82 and 85 kDa, encoded by the same or closely related genes.

It localises to the nucleus. UBF recognizes the ribosomal RNA gene promotor and activates transcription mediated by RNA polymerase I through cooperative interactions with the species-specific factor SL1. It binds specifically to the upstream control element. This Xenopus laevis (African clawed frog) protein is Nucleolar transcription factor 1-B (ubtf-b).